The chain runs to 378 residues: Zinc transporter 7 (378 aa).

Residues 1 to 37 (MLPLSIKDDEYKPPKFNLFGKISGWFRSILSDKTSRN) lie on the Cytoplasmic side of the membrane. A helical membrane pass occupies residues 38–58 (LFFFLCLNLSFAFVELLYGIW). Residues 59–67 (SNCLGLISD) lie on the Lumenal side of the membrane. Residues 68 to 88 (SFHMFFDSTAILAGLAASVIS) form a helical membrane-spanning segment. Residues 89-102 (KWRDNDAFSYGYVR) are Cytoplasmic-facing. A helical membrane pass occupies residues 103-123 (AEVLAGFVNGLFLIFTAFFIF). The Lumenal segment spans residues 124–140 (SEGVERALAPPDVHHER). Residues 141 to 161 (LLLVSILGFVVNLVGIFVFNH) traverse the membrane as a helical segment. A his-rich loop region spans residues 161-220 (HGGHGHSHGSGHGHSHSLFNGALDHSHGHEDHCHSHGAKHGGAHSHDHDHAHGHGHLHSH). At 162–238 (GGHGHSHGSG…AGPSRQILQG (77 aa)) the chain is on the cytoplasmic side. The interval 186 to 228 (SHGHEDHCHSHGAKHGGAHSHDHDHAHGHGHLHSHDGPSFKET) is disordered. A compositionally biased stretch (basic and acidic residues) spans 204 to 224 (HSHDHDHAHGHGHLHSHDGPS). Residues 239 to 259 (VFLHILADTLGSIGVIASAIM) form a helical membrane-spanning segment. Residues 260-264 (MQNFG) lie on the Lumenal side of the membrane. A helical transmembrane segment spans residues 265–285 (LMIADPICSILIAILIVVSVI). Residues 286-378 (PLLRESIGIL…LYVQIDFAAM (93 aa)) are Cytoplasmic-facing.

It belongs to the cation diffusion facilitator (CDF) transporter (TC 2.A.4) family. SLC30A subfamily. Homooligomer.

The protein resides in the golgi apparatus membrane. It is found in the cytoplasmic vesicle. The protein localises to the golgi apparatus. Its subcellular location is the trans-Golgi network. It localises to the sarcoplasmic reticulum. The protein resides in the mitochondrion. The enzyme catalyses Zn(2+)(in) = Zn(2+)(out). Functionally, zinc ion transporter mediating zinc entry from the cytosol into the lumen of organelles along the secretory pathway. By contributing to zinc ion homeostasis within the early secretory pathway, regulates the activation and folding of enzymes like alkaline phosphatases. The polypeptide is Zinc transporter 7 (Rattus norvegicus (Rat)).